A 161-amino-acid chain; its full sequence is Probable calcium-binding protein CML16 (161 aa).

4 consecutive EF-hand domains span residues 8–43 (DQIKQLKDIFARFDMDKDGSLTQLELAALLRSLGIK), 44–79 (PRGDQISLLLNQIDRNGNGSVEFDELVVAILPDINE), 83–118 (INQEQLMEVFRSFDRDGNGSITAAELAGSMAKMGHP), and 119–154 (LTYRELTEMMTEADSNGDGVISFNEFSHIMAKSAAD). Residues Asp21, Asp23, Asp25, Ser27, Glu32, Asp57, Asn59, Asn61, Ser63, Glu68, Asp96, Asp98, Asn100, Ser102, Glu107, Asp132, Asn134, Asp136, and Glu143 each coordinate Ca(2+).

Potential calcium sensor. The chain is Probable calcium-binding protein CML16 (CML16) from Arabidopsis thaliana (Mouse-ear cress).